A 644-amino-acid chain; its full sequence is Complement component C1q receptor (644 aa).

The N-terminal stretch at 1-22 (MAISTGLFLLLGLLGQPWAGAA) is a signal peptide. Over 23 to 572 (ADSQAVVCEG…SAHSDTDGQN (550 aa)) the chain is Extracellular. Residues 31 to 173 (EGTACYTAHW…CGTPEAPGNS (143 aa)) enclose the C-type lectin domain. Asparagine 102 carries an N-linked (GlcNAc...) asparagine glycan. 16 cysteine pairs are disulfide-bonded: cysteine 140–cysteine 164, cysteine 261–cysteine 272, cysteine 268–cysteine 282, cysteine 284–cysteine 297, cysteine 303–cysteine 314, cysteine 308–cysteine 325, cysteine 327–cysteine 340, cysteine 346–cysteine 355, cysteine 351–cysteine 364, cysteine 366–cysteine 380, cysteine 386–cysteine 397, cysteine 393–cysteine 406, cysteine 408–cysteine 422, cysteine 428–cysteine 440, cysteine 436–cysteine 449, and cysteine 451–cysteine 464. 2 consecutive EGF-like domains span residues 257 to 298 (PKFG…VTCA) and 299 to 341 (SRNP…VHCV). Asparagine 322 carries N-linked (GlcNAc...) asparagine glycosylation. The EGF-like 3; calcium-binding domain occupies 342 to 381 (DIDECQDSPCAQDCVNTLGSFHCECWVGYQPSGPKEEACE). Residues 382–423 (DVDECAAANSPCAQGCINTDGSFYCSCKEGYIVSGEDSTQCE) form the EGF-like 4; calcium-binding domain. The EGF-like 5; calcium-binding domain occupies 424–465 (DIDECSDARGNPCDSLCFNTDGSFRCGCPPGWELAPNGVFCS). The segment at 473-508 (LPARPPQKEDNDDRKESTMPPTEMPSSPSGSKDVSN) is disordered. Over residues 478–489 (PQKEDNDDRKES) the composition is skewed to basic and acidic residues. Over residues 490–501 (TMPPTEMPSSPS) the composition is skewed to low complexity. The chain crosses the membrane as a helical span at residues 573-593 (LLLFYILGTVVAISLLLVLAL). At 594–644 (GILIYHKRRAKKEEIKEKKPQNAADSYSWVPERAESQAPENQYSPTPGTDC) the chain is on the cytoplasmic side. Residues 605-644 (KEEIKEKKPQNAADSYSWVPERAESQAPENQYSPTPGTDC) form a disordered region. Phosphoserine is present on serine 619. Tyrosine 620 and tyrosine 636 each carry phosphotyrosine. The span at 631-644 (APENQYSPTPGTDC) shows a compositional bias: polar residues.

Homodimer. Interacts with C1QBP; the association may represent a cell surface C1q receptor. Interacts with surfactant protein A/SFTPA1. Interacts with multimerin-2/MMRN2. Interacts with DAG1; this interaction plays an important role in endothelial cell migration. Interacts with CBL. Interacts with IGFBP7. Interacts with VEGFR2. Post-translationally, N- and O-glycosylated. In terms of processing, phosphorylated on Tyr-620 and Tyr-636 by SRC; these phosphorylations promote endothelial cell adhesion and migration. Expressed in lung, heart and bone marrow. Expressed at lower level in ovary, whole embryo and fetal liver. Not detected in brain, adult liver or thymus. Highly expressed in peritoneal cavity and bone marrow macrophages. Not detected in epithelial cells.

The protein localises to the cell membrane. In terms of biological role, cell surface receptor that plays a role in various physiological processes including inflammation, phagocytosis, and cell adhesion. Plays a role in phagocytosis and enhances the uptake of apoptotic cells and immune complexes by acting as a receptor for defense collagens including surfactant protein A/SFTPA1, C1q, and mannose-binding lectin (MBL2). Plays a role in the regulation of endothelial cell function and adhesion by activating angiogenesis. Mechanistically, exerts its angiogenic function by associating with beta-dystroglycan, leading to SRC-dependent phosphorylation and subsequent recruitment of CBL. In turn, CBL provides a docking site for downstream signaling components, such as CRKL to enhance cell migration. Participates in angiogenesis also by acting as a receptor for the ECM pan-endothelial glycoprotein multimerin-2/MMRN2 and IGFBP7 ligands. Both ligands play a non-redundant role in CD93-mediated endothelial cell function. Acts as a key regulator of endothelial barrier function through modulating VEGFR2 function. The protein is Complement component C1q receptor (Cd93) of Mus musculus (Mouse).